The sequence spans 89 residues: Small ribosomal subunit protein uS14A (89 aa).

The protein belongs to the universal ribosomal protein uS14 family. As to quaternary structure, part of the 30S ribosomal subunit. Contacts proteins S3 and S10.

Binds 16S rRNA, required for the assembly of 30S particles and may also be responsible for determining the conformation of the 16S rRNA at the A site. This Lactococcus lactis subsp. lactis (strain IL1403) (Streptococcus lactis) protein is Small ribosomal subunit protein uS14A.